Here is a 171-residue protein sequence, read N- to C-terminus: 3-hydroxydecanoyl-[acyl-carrier-protein] dehydratase (171 aa).

Histidine 70 is an active-site residue.

The protein belongs to the thioester dehydratase family. FabA subfamily. As to quaternary structure, homodimer.

The protein resides in the cytoplasm. It carries out the reaction a (3R)-hydroxyacyl-[ACP] = a (2E)-enoyl-[ACP] + H2O. It catalyses the reaction (3R)-hydroxydecanoyl-[ACP] = (2E)-decenoyl-[ACP] + H2O. The catalysed reaction is (2E)-decenoyl-[ACP] = (3Z)-decenoyl-[ACP]. The protein operates within lipid metabolism; fatty acid biosynthesis. Its function is as follows. Necessary for the introduction of cis unsaturation into fatty acids. Catalyzes the dehydration of (3R)-3-hydroxydecanoyl-ACP to E-(2)-decenoyl-ACP and then its isomerization to Z-(3)-decenoyl-ACP. Can catalyze the dehydratase reaction for beta-hydroxyacyl-ACPs with saturated chain lengths up to 16:0, being most active on intermediate chain length. This chain is 3-hydroxydecanoyl-[acyl-carrier-protein] dehydratase, found in Pseudoalteromonas translucida (strain TAC 125).